We begin with the raw amino-acid sequence, 176 residues long: ATP synthase subunit delta (176 aa).

This sequence belongs to the ATPase delta chain family. In terms of assembly, F-type ATPases have 2 components, F(1) - the catalytic core - and F(0) - the membrane proton channel. F(1) has five subunits: alpha(3), beta(3), gamma(1), delta(1), epsilon(1). F(0) has three main subunits: a(1), b(2) and c(10-14). The alpha and beta chains form an alternating ring which encloses part of the gamma chain. F(1) is attached to F(0) by a central stalk formed by the gamma and epsilon chains, while a peripheral stalk is formed by the delta and b chains.

The protein resides in the cell inner membrane. Functionally, f(1)F(0) ATP synthase produces ATP from ADP in the presence of a proton or sodium gradient. F-type ATPases consist of two structural domains, F(1) containing the extramembraneous catalytic core and F(0) containing the membrane proton channel, linked together by a central stalk and a peripheral stalk. During catalysis, ATP synthesis in the catalytic domain of F(1) is coupled via a rotary mechanism of the central stalk subunits to proton translocation. This protein is part of the stalk that links CF(0) to CF(1). It either transmits conformational changes from CF(0) to CF(1) or is implicated in proton conduction. The polypeptide is ATP synthase subunit delta (Campylobacter concisus (strain 13826)).